A 245-amino-acid chain; its full sequence is Transmembrane protein 69 (245 aa).

5 consecutive transmembrane segments (helical) span residues 97-117 (ALYI…LMVI), 122-142 (IPVL…FLGG), 159-179 (YINL…ILFS), 185-205 (AIVT…FLLP), and 216-236 (IVST…ENIY).

It localises to the membrane. This is Transmembrane protein 69 (Tmem69) from Mus musculus (Mouse).